We begin with the raw amino-acid sequence, 337 residues long: Tetraacyldisaccharide 4'-kinase (337 aa).

55–62 (NAGGTGKT) lines the ATP pocket.

Belongs to the LpxK family.

The enzyme catalyses a lipid A disaccharide + ATP = a lipid IVA + ADP + H(+). It participates in glycolipid biosynthesis; lipid IV(A) biosynthesis; lipid IV(A) from (3R)-3-hydroxytetradecanoyl-[acyl-carrier-protein] and UDP-N-acetyl-alpha-D-glucosamine: step 6/6. Its function is as follows. Transfers the gamma-phosphate of ATP to the 4'-position of a tetraacyldisaccharide 1-phosphate intermediate (termed DS-1-P) to form tetraacyldisaccharide 1,4'-bis-phosphate (lipid IVA). This Dinoroseobacter shibae (strain DSM 16493 / NCIMB 14021 / DFL 12) protein is Tetraacyldisaccharide 4'-kinase.